Reading from the N-terminus, the 341-residue chain is Twinfilin-2 (341 aa).

ADF-H domains are found at residues 1-131 and 169-305; these read ATEE…KHLS and GLAF…DEVH. The residue at position 6 (K6) is an N6-acetyllysine. Phosphotyrosine is present on Y301. Residues 314–341 are disordered; it reads AFAKPKGPGGKRGHKRLIRGPGENGDDS. Over residues 322-331 the composition is skewed to basic residues; that stretch reads GGKRGHKRLI. Phosphoserine is present on S341.

This sequence belongs to the actin-binding proteins ADF family. Twinfilin subfamily. As to quaternary structure, interacts with G-actin; ADP-actin form and capping protein (CP). May also be able to interact with TWF1 and phosphoinositides, PI(4,5)P2. When bound to PI(4,5)P2, it is down-regulated. Interacts with MYO7A. Post-translationally, phosphorylated on both serine and threonine residues.

The protein localises to the cytoplasm. It is found in the cytoskeleton. Its subcellular location is the perinuclear region. It localises to the cell projection. The protein resides in the stereocilium. In terms of biological role, actin-binding protein involved in motile and morphological processes. Inhibits actin polymerization, likely by sequestering G-actin. By capping the barbed ends of filaments, it also regulates motility. Seems to play an important role in clathrin-mediated endocytosis and distribution of endocytic organelles. May play a role in regulating the mature length of the middle and short rows of stereocilia. This chain is Twinfilin-2 (TWF2), found in Pongo abelii (Sumatran orangutan).